The following is a 338-amino-acid chain: Glyceraldehyde-3-phosphate dehydrogenase (338 aa).

Residues threonine 11–isoleucine 12 and glycine 111 each bind NAD(+). Serine 140 to asparagine 142 contacts D-glyceraldehyde 3-phosphate. The active-site Nucleophile is cysteine 141. Arginine 169 is a binding site for NAD(+). The disordered stretch occupies residues glycine 170 to histidine 195. Residue histidine 195 to glycine 196 participates in D-glyceraldehyde 3-phosphate binding. An NAD(+)-binding site is contributed by glutamine 302.

The protein belongs to the glyceraldehyde-3-phosphate dehydrogenase family. In terms of assembly, homotetramer.

Its subcellular location is the cytoplasm. The catalysed reaction is D-glyceraldehyde 3-phosphate + phosphate + NADP(+) = (2R)-3-phospho-glyceroyl phosphate + NADPH + H(+). It catalyses the reaction D-glyceraldehyde 3-phosphate + phosphate + NAD(+) = (2R)-3-phospho-glyceroyl phosphate + NADH + H(+). The protein operates within carbohydrate degradation; glycolysis; pyruvate from D-glyceraldehyde 3-phosphate: step 1/5. This Methanobrevibacter smithii (strain ATCC 35061 / DSM 861 / OCM 144 / PS) protein is Glyceraldehyde-3-phosphate dehydrogenase.